Here is a 692-residue protein sequence, read N- to C-terminus: Pentatricopeptide repeat-containing protein At2g04860 (692 aa).

PPR repeat units lie at residues 12–46, 47–83, 84–114, 115–149, 150–184, 185–215, 216–250, 280–314, 316–345, 346–380, 381–411, 412–447, 448–482, 483–513, 514–548, 549–584, and 585–615; these read DLSYFHSLLKSCIHGEISSSPITIFRDLLRSSLTP, NHFTMSIFLQATTTSFNSFKLQVEQVQTHLTKSGLDR, FVYVKTSLLNLYLKKGCVTSAQMLFDEMPER, DTVVWNALICGYSRNGYECDAWKLFIVMLQQGFSP, SATTLVNLLPFCGQCGFVSQGRSVHGVAAKSGLEL, DSQVKNALISFYSKCAELGSAEVLFREMKDK, STVSWNTMIGAYSQSGLQEEAITVFKNMFEKNVEI, DISVVTSLVCAYSRCGCLVSAERLYASAKQDSIVG, TSIVSCYAEKGDMDIAVVYFSKTRQLCMKI, DAVALVGILHGCKKSSHIDIGMSLHGYAIKSGLCT, KTLVVNGLITMYSKFDDVETVLFLFEQLQET, PLISWNSVISGCVQSGRASTAFEVFHQMMLTGGLLP, DAITIASLLAGCSQLCCLNLGKELHGYTLRNNFEN, ENFVCTALIDMYAKCGNEVQAESVFKSIKAP, CTATWNSMISGYSLSGLQHRALSCYLEMREKGLKP, DEITFLGVLSACNHGGFVDEGKICFRAMIKEFGISP, and TLQHYALMVGLLGRACLFTEALYLIWKMDIK. Residues 620-692 form a type E motif; degenerate region; sequence VWGALLSACI…YDGYLGVSQI (73 aa).

It belongs to the PPR family. PCMP-E subfamily.

The protein is Pentatricopeptide repeat-containing protein At2g04860 (PCMP-E74) of Arabidopsis thaliana (Mouse-ear cress).